Reading from the N-terminus, the 149-residue chain is Large ribosomal subunit protein bL9 (149 aa).

Belongs to the bacterial ribosomal protein bL9 family.

Its function is as follows. Binds to the 23S rRNA. The protein is Large ribosomal subunit protein bL9 of Tolumonas auensis (strain DSM 9187 / NBRC 110442 / TA 4).